Reading from the N-terminus, the 183-residue chain is Nucleoside triphosphate pyrophosphatase (183 aa).

Asp71 acts as the Proton acceptor in catalysis.

This sequence belongs to the Maf family. The cofactor is a divalent metal cation.

It localises to the cytoplasm. It carries out the reaction a ribonucleoside 5'-triphosphate + H2O = a ribonucleoside 5'-phosphate + diphosphate + H(+). It catalyses the reaction a 2'-deoxyribonucleoside 5'-triphosphate + H2O = a 2'-deoxyribonucleoside 5'-phosphate + diphosphate + H(+). In terms of biological role, nucleoside triphosphate pyrophosphatase. May have a dual role in cell division arrest and in preventing the incorporation of modified nucleotides into cellular nucleic acids. This Campylobacter jejuni subsp. jejuni serotype O:6 (strain 81116 / NCTC 11828) protein is Nucleoside triphosphate pyrophosphatase.